The following is a 205-amino-acid chain: Large ribosomal subunit protein bL25 (205 aa).

This sequence belongs to the bacterial ribosomal protein bL25 family. CTC subfamily. Part of the 50S ribosomal subunit; part of the 5S rRNA/L5/L18/L25 subcomplex. Contacts the 5S rRNA. Binds to the 5S rRNA independently of L5 and L18.

This is one of the proteins that binds to the 5S RNA in the ribosome where it forms part of the central protuberance. The chain is Large ribosomal subunit protein bL25 from Bartonella bacilliformis (strain ATCC 35685 / KC583 / Herrer 020/F12,63).